Reading from the N-terminus, the 90-residue chain is MFTIDLSIRNTAFPISVQRKSAEDAEAVYQLILAAIRSGNPDIVELKCEGKTEKKIAVRASEISGVQIVQKDGTTPGGGRPPGFFAVAAE.

It belongs to the UPF0367 family.

The protein is UPF0367 protein Npun_R4552 of Nostoc punctiforme (strain ATCC 29133 / PCC 73102).